A 248-amino-acid polypeptide reads, in one-letter code: 3-deoxy-manno-octulosonate cytidylyltransferase (248 aa).

It belongs to the KdsB family.

The protein localises to the cytoplasm. It catalyses the reaction 3-deoxy-alpha-D-manno-oct-2-ulosonate + CTP = CMP-3-deoxy-beta-D-manno-octulosonate + diphosphate. It functions in the pathway nucleotide-sugar biosynthesis; CMP-3-deoxy-D-manno-octulosonate biosynthesis; CMP-3-deoxy-D-manno-octulosonate from 3-deoxy-D-manno-octulosonate and CTP: step 1/1. Its pathway is bacterial outer membrane biogenesis; lipopolysaccharide biosynthesis. Its function is as follows. Activates KDO (a required 8-carbon sugar) for incorporation into bacterial lipopolysaccharide in Gram-negative bacteria. The protein is 3-deoxy-manno-octulosonate cytidylyltransferase of Photobacterium profundum (strain SS9).